The chain runs to 207 residues: Guanylate kinase (207 aa).

The region spanning 3-181 is the Guanylate kinase-like domain; it reads GLLFVVSAAS…ALHDLESVIT (179 aa). 10–17 contributes to the ATP binding site; that stretch reads AASGTGKT.

Belongs to the guanylate kinase family.

The protein localises to the cytoplasm. It carries out the reaction GMP + ATP = GDP + ADP. Functionally, essential for recycling GMP and indirectly, cGMP. The polypeptide is Guanylate kinase (Acinetobacter baylyi (strain ATCC 33305 / BD413 / ADP1)).